A 278-amino-acid polypeptide reads, in one-letter code: Large ribosomal subunit protein uL2 (278 aa).

The interval 218–278 is disordered; it reads RPHNRGVVMN…IMRSRHQRKK (61 aa).

It belongs to the universal ribosomal protein uL2 family. In terms of assembly, part of the 50S ribosomal subunit. Forms a bridge to the 30S subunit in the 70S ribosome.

Its function is as follows. One of the primary rRNA binding proteins. Required for association of the 30S and 50S subunits to form the 70S ribosome, for tRNA binding and peptide bond formation. It has been suggested to have peptidyltransferase activity; this is somewhat controversial. Makes several contacts with the 16S rRNA in the 70S ribosome. The polypeptide is Large ribosomal subunit protein uL2 (Rhizobium etli (strain CIAT 652)).